A 208-amino-acid chain; its full sequence is LexA repressor (208 aa).

The segment at residues 28–48 (VREIGEAVGLASSSTVHGHLA) is a DNA-binding region (H-T-H motif). Active-site for autocatalytic cleavage activity residues include S130 and K168.

This sequence belongs to the peptidase S24 family. Homodimer.

It carries out the reaction Hydrolysis of Ala-|-Gly bond in repressor LexA.. In terms of biological role, represses a number of genes involved in the response to DNA damage (SOS response), including recA and lexA. In the presence of single-stranded DNA, RecA interacts with LexA causing an autocatalytic cleavage which disrupts the DNA-binding part of LexA, leading to derepression of the SOS regulon and eventually DNA repair. The sequence is that of LexA repressor from Shouchella clausii (strain KSM-K16) (Alkalihalobacillus clausii).